Here is a 609-residue protein sequence, read N- to C-terminus: Mitogen-activated protein kinase kinase kinase 3 (609 aa).

The tract at residues 1–202 (MPTWWGRKSC…SAVHGSRIGG (202 aa)) is disordered. Over residues 11–28 (KNKDDNHRGIISTDRDIK) the composition is skewed to basic and acidic residues. Composition is skewed to low complexity over residues 40–64 (PTRG…GFDS) and 90–108 (VSGS…SSGS). A Protein kinase domain is found at 214–470 (WKKGKFLGSG…ASQLLEHPFL (257 aa)). Residues 220–228 (LGSGTFGQV) and K243 contribute to the ATP site. The active-site Proton acceptor is the D339. 2 disordered regions span residues 487-511 (PRSY…SHDN) and 590-609 (MEPS…SRLV). Residues 594–609 (SFRTQTPNSPLRSRLV) show a composition bias toward polar residues.

The protein belongs to the protein kinase superfamily. STE Ser/Thr protein kinase family. MAP kinase kinase kinase subfamily. As to quaternary structure, interacts with PBL27. In terms of tissue distribution, expressed in flower buds, roots, leaves, seedlings, stems and immature siliques. Absent of mature pollen.

The enzyme catalyses L-seryl-[protein] + ATP = O-phospho-L-seryl-[protein] + ADP + H(+). It catalyses the reaction L-threonyl-[protein] + ATP = O-phospho-L-threonyl-[protein] + ADP + H(+). In Arabidopsis thaliana (Mouse-ear cress), this protein is Mitogen-activated protein kinase kinase kinase 3.